Reading from the N-terminus, the 205-residue chain is Riboflavin kinase (205 aa).

A disordered region spans residues 1–24 (MRPDTSRDPVAGPDSGPEPPFPIR). The Mg(2+) site is built by Thr-44 and Asn-46. Residue Glu-104 is the Nucleophile of the active site.

This sequence belongs to the flavokinase family. The cofactor is Zn(2+). Mg(2+) serves as cofactor.

The enzyme catalyses riboflavin + ATP = FMN + ADP + H(+). It participates in cofactor biosynthesis; FMN biosynthesis; FMN from riboflavin (ATP route): step 1/1. Functionally, catalyzes the phosphorylation of riboflavin (vitamin B2) to form flavin mononucleotide (FMN) coenzyme. The chain is Riboflavin kinase (fmn1) from Aspergillus terreus (strain NIH 2624 / FGSC A1156).